A 227-amino-acid polypeptide reads, in one-letter code: H-2 class II histocompatibility antigen, A-U alpha chain (227 aa).

The tract at residues 1–82 is alpha-1; it reads DHVGSYGIVV…KRSNSTPATN (82 aa). Over 1 to 189 the chain is Extracellular; sequence DHVGSYGIVV…IPAPMSELTE (189 aa). An alpha-2 region spans residues 83-176; the sequence is EAPQATVFPK…GLEEPVLKHW (94 aa). Positions 85 to 177 constitute an Ig-like C1-type domain; the sequence is PQATVFPKSP…LEEPVLKHWE (93 aa). A disulfide bond links cysteine 105 and cysteine 161. A glycan (N-linked (GlcNAc...) asparagine) is linked at asparagine 116. The tract at residues 177-189 is connecting peptide; the sequence is EPEIPAPMSELTE. The helical transmembrane segment at 190–215 threads the bilayer; that stretch reads TVVCALGLSVGLVGIVVGTIFIIQGL. Topologically, residues 216–227 are cytoplasmic; it reads RSGGTSRHPGPL.

This sequence belongs to the MHC class II family.

The protein localises to the membrane. The chain is H-2 class II histocompatibility antigen, A-U alpha chain (H2-Aa) from Mus musculus (Mouse).